A 469-amino-acid polypeptide reads, in one-letter code: Melanopsin (469 aa).

Residues 1-71 lie on the Extracellular side of the membrane; the sequence is MDSPPGPTAP…VDVPDHAHYI (71 aa). N-linked (GlcNAc...) asparagine glycosylation is present at Asn-30. A helical transmembrane segment spans residues 72–92; that stretch reads LGTVILLVGLTGMLGNLTVIY. At 93–106 the chain is on the cytoplasmic side; it reads TFCRSRSLRTPANM. Residues 107–127 form a helical membrane-spanning segment; sequence LIINLAVSDFLMSFTQAPVFF. Residues 128–143 are Extracellular-facing; that stretch reads ASSLYKKWLFGETGCE. Cys-142 and Cys-220 are disulfide-bonded. The chain crosses the membrane as a helical span at residues 144-164; sequence FYAFCGAVLGITSMITLTAIA. At 165-187 the chain is on the cytoplasmic side; the sequence is LDRYLVITRPLATIGMGSKRRTA. The helical transmembrane segment at 188–208 threads the bilayer; the sequence is LVLLGIWLYALAWSLPPFFGW. Over 209–237 the chain is Extracellular; it reads SAYVPEGLLTSCSWDYVTFTPQVRAYTML. The chain crosses the membrane as a helical span at residues 238 to 258; the sequence is LFCFVFFLPLLVIIFCYISIF. The Cytoplasmic segment spans residues 259-295; the sequence is RAIRETGRACEGWSESPQRRRQWHRLQSEWKMAKVAL. The helical transmembrane segment at 296 to 316 threads the bilayer; that stretch reads IVILLFVLSWAPYSTVALVAF. The Extracellular portion of the chain corresponds to 317 to 328; it reads AGYSHILTPYMS. A helical transmembrane segment spans residues 329-349; it reads SVPAVIAKASAIHNPIVYAIT. Lys-336 bears the N6-(retinylidene)lysine mark. Over 350 to 469 the chain is Cytoplasmic; that stretch reads HPKYRAAIAQ…SLDLGMQDAP (120 aa). A disordered region spans residues 409–469; sequence GSESEVGWTD…SLDLGMQDAP (61 aa).

The protein belongs to the G-protein coupled receptor 1 family. Opsin subfamily.

It is found in the cell membrane. The protein localises to the cell projection. It localises to the axon. Its subcellular location is the dendrite. The protein resides in the perikaryon. Functionally, photoreceptor that binds cis-retinaldehydes. Contributes to pupillar reflex, photoentrainment and other non-image forming responses to light. May be involved in the optokinetic visual tracking response. May be involved in the regulation of retinal hyaloid vessel growth and regression. The protein is Melanopsin (OPN4) of Phodopus sungorus (Striped hairy-footed hamster).